The following is a 1134-amino-acid chain: Translation initiation factor IF-2 (1134 aa).

Disordered regions lie at residues 55 to 465 (AQKS…HIIG) and 491 to 524 (LARP…QRQR). Composition is skewed to polar residues over residues 56–65 (QKSSNSSSPP), 83–105 (SPPT…SSLK), 137–147 (PSISKNNSLKV), 208–234 (QIKQ…IQTN), and 251–264 (VQSQ…NNNL). 2 stretches are compositionally biased toward basic and acidic residues: residues 391–403 (KRGD…KKDG) and 438–450 (PDWD…EALR). Composition is skewed to basic residues over residues 495–504 (GKPKASKKSG) and 511–524 (LRKR…QRQR). One can recognise a tr-type G domain in the interval 626-798 (RRPPVVTVMG…ILLVTEVEDL (173 aa)). The segment at 635–642 (GHVDHGKT) is G1. 635-642 (GHVDHGKT) is a binding site for GTP. The tract at residues 660 to 664 (GITQH) is G2. The G3 stretch occupies residues 685–688 (DTPG). GTP is bound by residues 685–689 (DTPGH) and 739–742 (NKID). The segment at 739 to 742 (NKID) is G4. Residues 775-777 (SAI) form a G5 region.

It belongs to the TRAFAC class translation factor GTPase superfamily. Classic translation factor GTPase family. IF-2 subfamily.

The protein resides in the cytoplasm. In terms of biological role, one of the essential components for the initiation of protein synthesis. Protects formylmethionyl-tRNA from spontaneous hydrolysis and promotes its binding to the 30S ribosomal subunits. Also involved in the hydrolysis of GTP during the formation of the 70S ribosomal complex. In Prochlorococcus marinus (strain SARG / CCMP1375 / SS120), this protein is Translation initiation factor IF-2.